A 96-amino-acid polypeptide reads, in one-letter code: Cysteine proteinase (96 aa).

C25 and C79 are joined by a disulfide. Residues H31 and N58 contribute to the active site.

This sequence belongs to the peptidase C1 family.

The protein is Cysteine proteinase of Carica papaya (Papaya).